Consider the following 389-residue polypeptide: Nucleic acid dioxygenase ALKBH1 (389 aa).

The tract at residues 86-389 (SKWQAYGLKG…VKRARINPDS (304 aa)) is tRNA-binding. Substrate contacts are provided by residues tryptophan 144 and 175-177 (YHY). In terms of domain architecture, Fe2OG dioxygenase spans 208-347 (GFEDFRAEAG…RVNMTVRQVL (140 aa)). 220–222 (NYY) lines the 2-oxoglutarate pocket. Residues histidine 231, aspartate 233, and histidine 287 each coordinate Fe cation. Aspartate 233 contacts substrate. 338-344 (RVNMTVR) serves as a coordination point for 2-oxoglutarate.

This sequence belongs to the alkB family. As to quaternary structure, monomer. Interacts with DNAJB6. Requires Fe(2+) as cofactor. As to expression, ubiquitous.

The protein resides in the nucleus. It localises to the mitochondrion. It carries out the reaction 2'-deoxyribonucleotide-(2'-deoxyribose 5'-phosphate)-2'-deoxyribonucleotide-DNA = a 3'-end 2'-deoxyribonucleotide-(2,3-dehydro-2,3-deoxyribose 5'-phosphate)-DNA + a 5'-end 5'-phospho-2'-deoxyribonucleoside-DNA + H(+). It catalyses the reaction a methylated nucleobase within DNA + 2-oxoglutarate + O2 = a nucleobase within DNA + formaldehyde + succinate + CO2. The catalysed reaction is an N(6)-methyl-2'-deoxyadenosine in DNA + 2-oxoglutarate + O2 = a 2'-deoxyadenosine in DNA + formaldehyde + succinate + CO2. The enzyme catalyses an N(1)-methyladenosine in tRNA + 2-oxoglutarate + O2 = an adenosine in tRNA + formaldehyde + succinate + CO2. It carries out the reaction 5-methylcytidine(34) in mitochondrial tRNA(Met) + 2 2-oxoglutarate + 2 O2 = 5-formylcytidine(34) in mitochondrial tRNA(Met) + 2 succinate + 2 CO2 + H2O. It catalyses the reaction an N(3)-methylcytidine in mRNA + 2-oxoglutarate + O2 = a cytidine in mRNA + formaldehyde + succinate + CO2. The catalysed reaction is N(1)-methyladenosine(58) in tRNA + 2-oxoglutarate + O2 = adenosine(58) in tRNA + formaldehyde + succinate + CO2. In terms of biological role, dioxygenase that acts on nucleic acids, such as DNA and tRNA. Requires molecular oxygen, alpha-ketoglutarate and iron. A number of activities have been described for this dioxygenase, but recent results suggest that it mainly acts on tRNAs and mediates their demethylation or oxidation depending on the context and subcellular compartment. Mainly acts as a tRNA demethylase by removing N(1)-methyladenine from various tRNAs, with a preference for N(1)-methyladenine at position 58 (m1A58) present on a stem loop structure of tRNAs. Acts as a regulator of translation initiation and elongation in response to glucose deprivation: regulates both translation initiation, by mediating demethylation of tRNA(Met), and translation elongation, N(1)-methyladenine-containing tRNAs being preferentially recruited to polysomes to promote translation elongation. In mitochondrion, specifically interacts with mt-tRNA(Met) and mediates oxidation of mt-tRNA(Met) methylated at cytosine(34) to form 5-formylcytosine (f(5)c) at this position. mt-tRNA(Met) containing the f(5)c modification at the wobble position enables recognition of the AUA codon in addition to the AUG codon, expanding codon recognition in mitochondrial translation. Specifically demethylates DNA methylated on the 6th position of adenine (N(6)-methyladenosine) DNA. N(6)-methyladenosine (m6A) DNA is present at some L1 elements in embryonic stem cells and probably promotes their silencing. Demethylates mRNAs containing N(3)-methylcytidine modification. Also able to repair alkylated single-stranded DNA by oxidative demethylation, but with low activity. Also has DNA lyase activity and introduces double-stranded breaks at abasic sites: cleaves both single-stranded DNA and double-stranded DNA at abasic sites, with the greatest activity towards double-stranded DNA with two abasic sites. DNA lyase activity does not require alpha-ketoglutarate and iron and leads to the formation of an irreversible covalent protein-DNA adduct with the 5' DNA product. DNA lyase activity is not required during base excision repair and class switch recombination of the immunoglobulin heavy chain during B lymphocyte activation. May play a role in placental trophoblast lineage differentiation. The protein is Nucleic acid dioxygenase ALKBH1 of Homo sapiens (Human).